The sequence spans 833 residues: Toll-like receptor 4 (833 aa).

The N-terminal stretch at 1-23 (MMPPTRLAGTLIPAMAFLSCLRP) is a signal peptide. Positions 24-54 (ESWDPCVEVVPNITYQCMDLNLHKIPDNIPS) constitute an LRRNT domain. The Extracellular portion of the chain corresponds to 24–632 (ESWDPCVEVV…FRNATCQVRK (609 aa)). C29 and C40 are disulfide-bonded. N35 carries N-linked (GlcNAc...) asparagine glycosylation. LRR repeat units follow at residues 55–76 (STKD…SFSN), 79–100 (ELQV…AYQG), 103–124 (HLSI…AFSG), 127–148 (SLQT…PIGH), and 151–172 (TLKE…EYFS). N173 carries N-linked (GlcNAc...) asparagine glycosylation. LRR repeat units follow at residues 176–197 (NLEY…DLQV), 205–225 (NLSL…AFKE), and 227–236 (KLRELTLRSN). N-linked (GlcNAc...) asparagine glycosylation is present at N205. N238 carries N-linked (GlcNAc...) asparagine glycosylation. C281 and C306 are oxidised to a cystine. N309 carries an N-linked (GlcNAc...) asparagine glycan. 9 LRR repeats span residues 352 to 373 (PLKE…VKLE), 374 to 394 (SLEF…CSER), 400 to 420 (RLKH…NFLG), 423 to 444 (QLEY…SVFL), 448 to 456 (NLRYLDISY), 472 to 495 (SLQI…FMEL), 497 to 518 (NLTI…AFNS), 521 to 542 (KLQL…PYEP), and 545 to 565 (SLQT…QELR). Residues C390 and C391 are joined by a disulfide bond. N497 and N526 each carry an N-linked (GlcNAc...) asparagine glycan. N570 and N575 each carry an N-linked (GlcNAc...) asparagine glycan. An LRRCT domain is found at 579–630 (NDFACVCEHQSFLQWVKDQRQLLVEVEQMVCAKPLDMQGMPMLNFRNATCQV). 2 cysteine pairs are disulfide-bonded: C583–C609 and C585–C628. N-linked (GlcNAc...) asparagine glycosylation occurs at N625. Residues 633–653 (TIITGSVFTVLLVFLVVVLVY) traverse the membrane as a helical segment. The Cytoplasmic portion of the chain corresponds to 654-833 (KFYFHLMLLA…PEGMADAEGS (180 aa)). A TIR domain is found at 673-816 (STYDAFVIYS…IFWRRLRKAL (144 aa)).

This sequence belongs to the Toll-like receptor family. In terms of assembly, belongs to the lipopolysaccharide (LPS) receptor, a multi-protein complex containing at least CD14, LY96 and TLR4. Binding to bacterial LPS leads to homodimerization. Interacts with LY96 via the extracellular domain. Interacts with MYD88 and TIRAP via their respective TIR domains. Interacts with TICAM2. Interacts with NOX4. Interacts with CNPY3 and HSP90B1; this interaction is required for proper folding in the endoplasmic reticulum. Interacts with MAP3K21; this interaction leads to negative regulation of TLR4 signaling. Interacts with CD36, following CD36 stimulation by oxLDL or amyloid-beta 42, and forms a heterodimer with TLR6. The trimeric complex is internalized and triggers inflammatory response. LYN kinase activity facilitates TLR4-TLR6 heterodimerization and signal initiation. Interacts with TICAM1 in response to LPS in a WDFY1-dependent manner. Interacts with WDFY1 in response to LPS. Interacts with SMPDL3B. Interacts with CEACAM1; upon lipopolysaccharide stimulation, forms a complex including TLR4 and the phosphorylated form of SYK and CEACAM1, which in turn, recruits PTPN6 that dephosphorylates SYK, reducing the production of reactive oxygen species (ROS) and lysosome disruption, which in turn, reduces the activity of the inflammasome. Interacts with RFTN1; the interaction occurs in response to lipopolysaccharide stimulation. Interacts with SCIMP; the interaction occurs in response to lipopolysaccharide stimulation and is enhanced by phosphorylation of SCIMP by LYN. This interaction facilitates the phosphorylation of TLR4 by LYN which elicits a selective cytokine response in macrophages. Interacts with TRAF3IP3. Interacts with TREM1; this interaction enhances TLR4-mediated inflammatory response. Interacts with ZG16B/PAUF. Interacts with CD82; this interaction inhibits TLR4-mediated signaling pathway. Phosphorylated on tyrosine residues by LYN after binding lipopolysaccharide. In terms of processing, ubiquitinated by RNF128 via 'Lys-28'-linked polyubiquitin chains, leading to proteasomal degradation.

It localises to the cell membrane. The protein localises to the early endosome. Its subcellular location is the cell projection. It is found in the ruffle. Its function is as follows. Transmembrane receptor that functions as a pattern recognition receptor recognizing pathogen- and damage-associated molecular patterns (PAMPs and DAMPs) to induce innate immune responses via downstream signaling pathways. At the plasma membrane, cooperates with LY96 to mediate the innate immune response to bacterial lipopolysaccharide (LPS). Also involved in LPS-independent inflammatory responses triggered by free fatty acids, such as palmitate, and Ni(2+). Mechanistically, acts via MYD88, TIRAP and TRAF6, leading to NF-kappa-B activation, cytokine secretion and the inflammatory response. Alternatively, CD14-mediated TLR4 internalization via endocytosis is associated with the initiation of a MYD88-independent signaling via the TICAM1-TBK1-IRF3 axis leading to type I interferon production. In addition to the secretion of proinflammatory cytokines, initiates the activation of NLRP3 inflammasome and formation of a positive feedback loop between autophagy and NF-kappa-B signaling cascade. In complex with TLR6, promotes inflammation in monocytes/macrophages by associating with TLR6 and the receptor CD86. Upon ligand binding, such as oxLDL or amyloid-beta 42, the TLR4:TLR6 complex is internalized and triggers inflammatory response, leading to NF-kappa-B-dependent production of CXCL1, CXCL2 and CCL9 cytokines, via MYD88 signaling pathway, and CCL5 cytokine, via TICAM1 signaling pathway. In myeloid dendritic cells, vesicular stomatitis virus glycoprotein G but not LPS promotes the activation of IRF7, leading to type I IFN production in a CD14-dependent manner. The protein is Toll-like receptor 4 (TLR4) of Felis catus (Cat).